Here is a 340-residue protein sequence, read N- to C-terminus: Ketol-acid reductoisomerase (NADP(+)) (340 aa).

In terms of domain architecture, KARI N-terminal Rossmann spans 5-182 (MEYEKDVKVA…GSARVGLLET (178 aa)). NADP(+) is bound by residues 26–29 (YGSQ), Arg-49, Ser-53, and 83–86 (DEIQ). Residue His-108 is part of the active site. Gly-134 serves as a coordination point for NADP(+). The region spanning 183-328 (TYKEETEEDL…AELRKAMPFV (146 aa)) is the KARI C-terminal knotted domain. Positions 191, 195, 227, and 231 each coordinate Mg(2+). A substrate-binding site is contributed by Ser-252.

It belongs to the ketol-acid reductoisomerase family. The cofactor is Mg(2+).

It catalyses the reaction (2R)-2,3-dihydroxy-3-methylbutanoate + NADP(+) = (2S)-2-acetolactate + NADPH + H(+). It carries out the reaction (2R,3R)-2,3-dihydroxy-3-methylpentanoate + NADP(+) = (S)-2-ethyl-2-hydroxy-3-oxobutanoate + NADPH + H(+). Its pathway is amino-acid biosynthesis; L-isoleucine biosynthesis; L-isoleucine from 2-oxobutanoate: step 2/4. The protein operates within amino-acid biosynthesis; L-valine biosynthesis; L-valine from pyruvate: step 2/4. Functionally, involved in the biosynthesis of branched-chain amino acids (BCAA). Catalyzes an alkyl-migration followed by a ketol-acid reduction of (S)-2-acetolactate (S2AL) to yield (R)-2,3-dihydroxy-isovalerate. In the isomerase reaction, S2AL is rearranged via a Mg-dependent methyl migration to produce 3-hydroxy-3-methyl-2-ketobutyrate (HMKB). In the reductase reaction, this 2-ketoacid undergoes a metal-dependent reduction by NADPH to yield (R)-2,3-dihydroxy-isovalerate. This is Ketol-acid reductoisomerase (NADP(+)) from Streptococcus sanguinis (strain SK36).